The primary structure comprises 472 residues: MAGEDHPWHGSILYNLLMSAKQKHGSREEREVRLGAQCWGCACGTQPVLGGEGLPGGQALSLLYRCCFCGENHPRQGGILYSMLTNARQPSGATEAPRARFRTPCWGCACSNAKPLVGRXGLPAGQVPSLLYRCCFCGKKHPRQGSILYSLLTNAQQTHVSREVPEAHRGGEWWQLSYCTHNVGGPEGLQSTQAMAFLYRSYVCCEEQPQQSSVASDTPVRADQTPAAPQEQPRAPWWDTSSGVQRPIALKDPQVVCEAASAGLLKTLRFVKYLPCFQILPLDQQLVLVRSCWAPLLMLELAQDHLHFEMMEISEPNLMHEMLTTRRQETEGPEPADPQATEQPQTVSAEAGHVLSVAAVQAIKSFFFKCWSLNIDTKEYAYLKGTVLFNPDLPGLQCVKYIESLQWRTQQILTEHIRLMQREYQIRSAELNSALFLLRFINTDVVTELFFRPIIGAVSMDDMMLEMLCAKL.

A run of 3 repeats spans residues 1-67, 68-135, and 136-202. The 4 X 67 AA tandem repeats stretch occupies residues 1-255; it reads MAGEDHPWHG…RPIALKDPQV (255 aa). 3 consecutive short sequence motifs (LXXLL motif) follow at residues 13–17, 80–84, and 148–152; these read LYNLL, LYSML, and LYSLL. An NR LBD domain is found at 190–471; the sequence is QSTQAMAFLY…DMMLEMLCAK (282 aa). Residues 203–255 form a 4; truncated repeat; sequence VCCEEQPQQSSVASDTPVRADQTPAAPQEQPRAPWWDTSSGVQRPIALKDPQV. Disordered regions lie at residues 214 to 237 and 326 to 345; these read VASDTPVRADQTPAAPQEQPRAPW and RRQETEGPEPADPQATEQPQ. Residues 463 to 468 carry the AF-2 motif motif; the sequence is MMLEML.

This sequence belongs to the nuclear hormone receptor family. NR0 subfamily. As to quaternary structure, homodimer. Interacts with NR5A1, NR5A2, NR0B2 and with COPS2. Interacts with ESRRB; represses ESRRB activity at the GATA6 promoter.

Its subcellular location is the nucleus. It localises to the cytoplasm. Nuclear receptor that lacks a DNA-binding domain and acts as a corepressor that inhibits the transcriptional activity of other nuclear receptors through heterodimeric interactions. Component of a cascade required for the development of the hypothalamic-pituitary-adrenal-gonadal axis. May also have a role in the development of the embryo and in the maintenance of embryonic stem cell pluripotency. In Rattus norvegicus (Rat), this protein is Nuclear receptor subfamily 0 group B member 1 (Nr0b1).